The following is a 259-amino-acid chain: Malonyl-[acyl-carrier protein] O-methyltransferase (259 aa).

It belongs to the methyltransferase superfamily.

The enzyme catalyses malonyl-[ACP] + S-adenosyl-L-methionine = malonyl-[ACP] methyl ester + S-adenosyl-L-homocysteine. The protein operates within cofactor biosynthesis; biotin biosynthesis. Its function is as follows. Converts the free carboxyl group of a malonyl-thioester to its methyl ester by transfer of a methyl group from S-adenosyl-L-methionine (SAM). It allows to synthesize pimeloyl-ACP via the fatty acid synthetic pathway. In Anoxybacillus flavithermus (strain DSM 21510 / WK1), this protein is Malonyl-[acyl-carrier protein] O-methyltransferase.